We begin with the raw amino-acid sequence, 163 residues long: ATP synthase subunit b 2 (163 aa).

The chain crosses the membrane as a helical span at residues 5–25; it reads SLATLWATIALIIFLGVAIYI.

This sequence belongs to the ATPase B chain family. F-type ATPases have 2 components, F(1) - the catalytic core - and F(0) - the membrane proton channel. F(1) has five subunits: alpha(3), beta(3), gamma(1), delta(1), epsilon(1). F(0) has three main subunits: a(1), b(2) and c(10-14). The alpha and beta chains form an alternating ring which encloses part of the gamma chain. F(1) is attached to F(0) by a central stalk formed by the gamma and epsilon chains, while a peripheral stalk is formed by the delta and b chains.

Its subcellular location is the cell inner membrane. Its function is as follows. F(1)F(0) ATP synthase produces ATP from ADP in the presence of a proton or sodium gradient. F-type ATPases consist of two structural domains, F(1) containing the extramembraneous catalytic core and F(0) containing the membrane proton channel, linked together by a central stalk and a peripheral stalk. During catalysis, ATP synthesis in the catalytic domain of F(1) is coupled via a rotary mechanism of the central stalk subunits to proton translocation. Functionally, component of the F(0) channel, it forms part of the peripheral stalk, linking F(1) to F(0). The protein is ATP synthase subunit b 2 of Mesorhizobium japonicum (strain LMG 29417 / CECT 9101 / MAFF 303099) (Mesorhizobium loti (strain MAFF 303099)).